Here is a 215-residue protein sequence, read N- to C-terminus: FGFR1 oncogene partner 2 homolog (215 aa).

Residues 12–186 are a coiled coil; that stretch reads AKELVERLRE…REILQITKIS (175 aa). The tract at residues 193–215 is disordered; sequence EDASENSPHSAPVPNTDLILRKS.

This sequence belongs to the SIKE family.

It localises to the cytoplasm. This chain is FGFR1 oncogene partner 2 homolog (fgfr1op2), found in Xenopus laevis (African clawed frog).